A 312-amino-acid chain; its full sequence is Ribosomal RNA small subunit methyltransferase H (312 aa).

S-adenosyl-L-methionine-binding positions include 32–34 (AGH), Asp52, Phe79, Asp100, and Gln107.

This sequence belongs to the methyltransferase superfamily. RsmH family.

It localises to the cytoplasm. It catalyses the reaction cytidine(1402) in 16S rRNA + S-adenosyl-L-methionine = N(4)-methylcytidine(1402) in 16S rRNA + S-adenosyl-L-homocysteine + H(+). In terms of biological role, specifically methylates the N4 position of cytidine in position 1402 (C1402) of 16S rRNA. The polypeptide is Ribosomal RNA small subunit methyltransferase H (Listeria monocytogenes serotype 4b (strain F2365)).